Here is a 908-residue protein sequence, read N- to C-terminus: 26S proteasome non-ATPase regulatory subunit 2 (908 aa).

The residue at position 1 (M1) is an N-acetylmethionine. The interval 1-52 is disordered; sequence MEEGGRDKAPVQPQQSPAAAPGGTDEKPSGKERRDAGDKDKEQELSEEDKQL. A compositionally biased stretch (low complexity) spans 10–21; sequence PVQPQQSPAAAP. S16 bears the Phosphoserine mark. Position 24 is a phosphothreonine (T24). Positions 24 to 52 are enriched in basic and acidic residues; sequence TDEKPSGKERRDAGDKDKEQELSEEDKQL. A phosphoserine mark is found at S29 and S147. Residue Y194 is modified to Phosphotyrosine. A phosphoserine mark is found at S361 and S363. 5 PC repeats span residues 409–442, 443–479, 480–514, 517–551, and 560–589; these read SAAA…YIKS, GALL…TMRL, GSIF…SMEV, VTAL…TELK, and LGLG…PFRS. K551 is modified (N6-acetyllysine). A compositionally biased stretch (basic and acidic residues) spans 623–643; the sequence is KEKEEDKDKKEKKDKDKKEAP. The tract at residues 623-645 is disordered; the sequence is KEKEEDKDKKEKKDKDKKEAPAD. 2 PC repeats span residues 692 to 723 and 742 to 757; these read LALA…EVSY and AAML…KDPN. Positions 708–903 are required for interaction with UBLCP1; sequence DTLSKFSHDA…LEGFVILRKN (196 aa).

This sequence belongs to the proteasome subunit S2 family. Component of the 19S proteasome regulatory particle complex. The 26S proteasome consists of a 20S core particle (CP) and two 19S regulatory subunits (RP). The regulatory particle is made of a lid composed of 9 subunits, a base containing 6 ATPases and few additional components including PSMD2. Interacts with RPGRIP1L. Interacts with CRY1 in a KDM8-dependent manner. Interacts (via C-terminus) with phosphatase UBLCP1 (via ubiquitin-like domain); the interaction recruits UBLCP1 to the 19S regulatory particle where it dephosphorylates 19S subunit PSMC2/RPT1 which impairs PSMC2 ATPase activity and disrupts 26S proteasome assembly. Found in skeletal muscle, liver, heart, brain, kidney, pancreas, lung and placenta.

Functionally, component of the 26S proteasome, a multiprotein complex involved in the ATP-dependent degradation of ubiquitinated proteins. This complex plays a key role in the maintenance of protein homeostasis by removing misfolded or damaged proteins, which could impair cellular functions, and by removing proteins whose functions are no longer required. Therefore, the proteasome participates in numerous cellular processes, including cell cycle progression, apoptosis, or DNA damage repair. Binds to the intracellular domain of tumor necrosis factor type 1 receptor. The binding domain of TRAP1 and TRAP2 resides outside the death domain of TNFR1. The polypeptide is 26S proteasome non-ATPase regulatory subunit 2 (PSMD2) (Homo sapiens (Human)).